The following is a 448-amino-acid chain: Glutamate--tRNA ligase (448 aa).

The 'HIGH' region motif lies at 10–20; sequence PSPTGFLHIGN. Positions 214–218 match the 'KMSKS' region motif; sequence KLSKR. Residue Lys217 coordinates ATP.

This sequence belongs to the class-I aminoacyl-tRNA synthetase family. Glutamate--tRNA ligase type 1 subfamily. In terms of assembly, monomer.

It is found in the cytoplasm. The enzyme catalyses tRNA(Glu) + L-glutamate + ATP = L-glutamyl-tRNA(Glu) + AMP + diphosphate. In terms of biological role, catalyzes the attachment of glutamate to tRNA(Glu) in a two-step reaction: glutamate is first activated by ATP to form Glu-AMP and then transferred to the acceptor end of tRNA(Glu). The polypeptide is Glutamate--tRNA ligase (Phytoplasma australiense).